A 695-amino-acid polypeptide reads, in one-letter code: Elongation factor G 1 (695 aa).

Residues 6–281 (TRYRNIGIFA…AVVDYLPNPK (276 aa)) form the tr-type G domain. GTP is bound by residues 15–22 (AHVDAGKT), 79–83 (DTPGH), and 133–136 (NKLD).

This sequence belongs to the TRAFAC class translation factor GTPase superfamily. Classic translation factor GTPase family. EF-G/EF-2 subfamily.

The protein localises to the cytoplasm. Catalyzes the GTP-dependent ribosomal translocation step during translation elongation. During this step, the ribosome changes from the pre-translocational (PRE) to the post-translocational (POST) state as the newly formed A-site-bound peptidyl-tRNA and P-site-bound deacylated tRNA move to the P and E sites, respectively. Catalyzes the coordinated movement of the two tRNA molecules, the mRNA and conformational changes in the ribosome. In Synechocystis sp. (strain ATCC 27184 / PCC 6803 / Kazusa), this protein is Elongation factor G 1 (fusA).